A 25-amino-acid chain; its full sequence is Css54 (25 aa).

In terms of tissue distribution, expressed by the venom gland.

It is found in the secreted. Its subcellular location is the target cell membrane. Amphipathic peptide that shows antibacterial activity against E.coli (MIC=12.5 ug/ml) and S.aureus (MIC=12.5 ug/ml). Has hemolytic activity against human erythrocytes (25 uM provokes 83% of hemolysis). May act by disrupting the integrity of the bacterial cell membrane. Increases efficacy of antibiotics (ethambutol, pyrazinamide, isoniazid, rifampicin) when tested against S.aureus, probably by facilitating their incorporation into the bacteria. In Centruroides suffusus (Durango bark scorpion), this protein is Css54.